The following is a 90-amino-acid chain: Protein RALF-like 29 (90 aa).

An N-terminal signal peptide occupies residues 1–25 (MIKTKEVTFVTILIVLCVFISTIHA). Cystine bridges form between Cys-41–Cys-50 and Cys-63–Cys-69.

It belongs to the plant rapid alkalinization factor (RALF) family.

The protein resides in the secreted. In terms of biological role, cell signaling peptide that may regulate plant stress, growth, and development. Mediates a rapid alkalinization of extracellular space by mediating a transient increase in the cytoplasmic Ca(2+) concentration leading to a calcium-dependent signaling events through a cell surface receptor and a concomitant activation of some intracellular mitogen-activated protein kinases. The protein is Protein RALF-like 29 (RALFL29) of Arabidopsis thaliana (Mouse-ear cress).